A 360-amino-acid polypeptide reads, in one-letter code: Glycerol-1-phosphate dehydrogenase [NAD(P)+] (360 aa).

Residues 108 to 112 and 130 to 133 each bind NAD(+); these read GRVID and TAAS. Asp-135 serves as a coordination point for substrate. Residue Ser-139 coordinates NAD(+). Asp-182 lines the substrate pocket. Asp-182 and His-262 together coordinate Zn(2+). His-266 is a substrate binding site. Residue His-278 coordinates Zn(2+).

Belongs to the glycerol-1-phosphate dehydrogenase family. Zn(2+) serves as cofactor.

It localises to the cytoplasm. It catalyses the reaction sn-glycerol 1-phosphate + NAD(+) = dihydroxyacetone phosphate + NADH + H(+). It carries out the reaction sn-glycerol 1-phosphate + NADP(+) = dihydroxyacetone phosphate + NADPH + H(+). It functions in the pathway membrane lipid metabolism; glycerophospholipid metabolism. Its function is as follows. Catalyzes the NAD(P)H-dependent reduction of dihydroxyacetonephosphate (DHAP or glycerone phosphate) to glycerol 1-phosphate (G1P). The G1P thus generated is used as the glycerophosphate backbone of phospholipids in the cellular membranes of Archaea. The protein is Glycerol-1-phosphate dehydrogenase [NAD(P)+] of Methanocorpusculum labreanum (strain ATCC 43576 / DSM 4855 / Z).